Consider the following 161-residue polypeptide: Large ribosomal subunit protein uL16 (161 aa).

The disordered stretch occupies residues L140–S161.

It belongs to the universal ribosomal protein uL16 family. As to quaternary structure, part of the 50S ribosomal subunit.

Its function is as follows. Binds 23S rRNA and is also seen to make contacts with the A and possibly P site tRNAs. In Prochlorococcus marinus (strain NATL2A), this protein is Large ribosomal subunit protein uL16.